A 360-amino-acid polypeptide reads, in one-letter code: Phospho-N-acetylmuramoyl-pentapeptide-transferase (360 aa).

The next 10 helical transmembrane spans lie at glycine 27 to leucine 47, threonine 72 to alanine 92, leucine 94 to phenylalanine 114, leucine 135 to proline 155, glycine 167 to serine 187, glycine 199 to valine 219, alanine 236 to phenylalanine 256, isoleucine 263 to alanine 283, valine 289 to valine 309, and glutamine 337 to leucine 357.

This sequence belongs to the glycosyltransferase 4 family. MraY subfamily. Mg(2+) serves as cofactor.

Its subcellular location is the cell inner membrane. The enzyme catalyses UDP-N-acetyl-alpha-D-muramoyl-L-alanyl-gamma-D-glutamyl-meso-2,6-diaminopimeloyl-D-alanyl-D-alanine + di-trans,octa-cis-undecaprenyl phosphate = di-trans,octa-cis-undecaprenyl diphospho-N-acetyl-alpha-D-muramoyl-L-alanyl-D-glutamyl-meso-2,6-diaminopimeloyl-D-alanyl-D-alanine + UMP. It functions in the pathway cell wall biogenesis; peptidoglycan biosynthesis. Its function is as follows. Catalyzes the initial step of the lipid cycle reactions in the biosynthesis of the cell wall peptidoglycan: transfers peptidoglycan precursor phospho-MurNAc-pentapeptide from UDP-MurNAc-pentapeptide onto the lipid carrier undecaprenyl phosphate, yielding undecaprenyl-pyrophosphoryl-MurNAc-pentapeptide, known as lipid I. The chain is Phospho-N-acetylmuramoyl-pentapeptide-transferase from Beijerinckia indica subsp. indica (strain ATCC 9039 / DSM 1715 / NCIMB 8712).